We begin with the raw amino-acid sequence, 292 residues long: G1/S-specific cyclin-D3 (292 aa).

One can recognise a Cyclin N-terminal domain in the interval 27–152 (VLQSLLRLEE…LVLGKLKWDL (126 aa)). Residues 255–292 (LREAAQTSPSPAPKAPRGSSSQGPSQTSTPTDVTAIHL) are disordered. Phosphoserine is present on residues Ser-264 and Ser-279. The span at 272–285 (GSSSQGPSQTSTPT) shows a compositional bias: low complexity. Phosphothreonine is present on Thr-283.

Belongs to the cyclin family. Cyclin D subfamily. As to quaternary structure, interacts with the CDK4 and CDK6 protein kinases to form a serine/threonine kinase holoenzyme complex. The cyclin subunit imparts substrate specificity to the complex. Interacts with ATF5. Interacts with EIF3K. Component of the ternary complex cyclin D/CDK4/CDKN1B required for nuclear translocation and modulation of CDK4-mediated kinase activity. Can form similar complexes with either CDKN1A or CDKN2A. In terms of processing, phosphorylation at Thr-283 by MAP kinases is required for ubiquitination and degradation by the DCX(AMBRA1) complex. Ubiquitinated by the DCX(AMBRA1) complex during the transition from G1 to S cell phase, leading to its degradation: ubiquitination is dependent on Thr-283 phosphorylation. The DCX(AMBRA1) complex represents the major regulator of CCND3 stability during the G1/S transition. Polyubiquitinated by the SCF(FBXL2) complex, leading to proteasomal degradation.

The protein localises to the nucleus. The protein resides in the cytoplasm. In terms of biological role, regulatory component of the cyclin D3-CDK4 (DC) complex that phosphorylates and inhibits members of the retinoblastoma (RB) protein family including RB1 and regulates the cell-cycle during G(1)/S transition. Phosphorylation of RB1 allows dissociation of the transcription factor E2F from the RB/E2F complex and the subsequent transcription of E2F target genes which are responsible for the progression through the G(1) phase. Hypophosphorylates RB1 in early G(1) phase. Cyclin D-CDK4 complexes are major integrators of various mitogenenic and antimitogenic signals. Component of the ternary complex, cyclin D3/CDK4/CDKN1B, required for nuclear translocation and activity of the cyclin D-CDK4 complex. Shows transcriptional coactivator activity with ATF5 independently of CDK4. The chain is G1/S-specific cyclin-D3 (CCND3) from Bos taurus (Bovine).